The following is a 1124-amino-acid chain: ATP-dependent DNA helicase mph1 (1124 aa).

2 disordered regions span residues 1–103 (MFTL…EARS) and 123–302 (QLTQ…PTQH). 2 stretches are compositionally biased toward acidic residues: residues 7-17 (DSSDYFDDDLG) and 169-178 (RDDEYDDDEE). Over residues 210–222 (TPIIGQQSTTIEA) the composition is skewed to polar residues. Residues 226–236 (LLDDIPDDAFD) show a composition bias toward acidic residues. Over residues 255-271 (SFTQSTNRPLGVRQTTL) the composition is skewed to polar residues. The region spanning 328-496 (IAQKGLFHNL…AVIDGLDISR (169 aa)) is the Helicase ATP-binding domain. 341 to 348 (LPTGLGKT) is a binding site for ATP. The short motif at 444–447 (DEAH) is the DEAH box element. Residues 666–840 (YLKQVVLNHF…GTRFTFHDDM (175 aa)) form the Helicase C-terminal domain. Over residues 855–873 (KRAIDIPEENTVRDLPEPK) the composition is skewed to basic and acidic residues. Disordered regions lie at residues 855 to 923 (KRAI…TPEP) and 1016 to 1124 (MPKA…DSDD). Composition is skewed to basic residues over residues 874–886 (RRGR…PKKF) and 906–916 (SKRRVPNKSKA).

Belongs to the DEAD box helicase family. DEAH subfamily. FANCM sub-subfamily. Interacts with the MHF histone-fold complex to form the FANCM-MHF complex.

Its subcellular location is the nucleus. The catalysed reaction is ATP + H2O = ADP + phosphate + H(+). ATP-dependent DNA helicase involved in DNA damage repair by homologous recombination and in genome maintenance. Capable of unwinding D-loops. Plays a role in limiting crossover recombinants during mitotic DNA double-strand break (DSB) repair. Component of a FANCM-MHF complex which promotes gene conversion at blocked replication forks, probably by reversal of the stalled fork. The protein is ATP-dependent DNA helicase mph1 of Aspergillus niger (strain ATCC MYA-4892 / CBS 513.88 / FGSC A1513).